Here is a 101-residue protein sequence, read N- to C-terminus: NADH-quinone oxidoreductase subunit K (101 aa).

Helical transmembrane passes span 4 to 24, 30 to 50, and 65 to 85; these read LEHY…GIFL, IVIL…LVAF, and FVLT…VTFF.

The protein belongs to the complex I subunit 4L family. As to quaternary structure, NDH-1 is composed of 14 different subunits. Subunits NuoA, H, J, K, L, M, N constitute the membrane sector of the complex.

It is found in the cell inner membrane. It carries out the reaction a quinone + NADH + 5 H(+)(in) = a quinol + NAD(+) + 4 H(+)(out). NDH-1 shuttles electrons from NADH, via FMN and iron-sulfur (Fe-S) centers, to quinones in the respiratory chain. The immediate electron acceptor for the enzyme in this species is believed to be ubiquinone. Couples the redox reaction to proton translocation (for every two electrons transferred, four hydrogen ions are translocated across the cytoplasmic membrane), and thus conserves the redox energy in a proton gradient. The chain is NADH-quinone oxidoreductase subunit K from Cereibacter sphaeroides (strain ATCC 17029 / ATH 2.4.9) (Rhodobacter sphaeroides).